Reading from the N-terminus, the 213-residue chain is Pyridoxine/pyridoxamine 5'-phosphate oxidase (213 aa).

Substrate contacts are provided by residues 9 to 12 (RKDY) and Lys-67. FMN-binding positions include 62-67 (RIVLLK), 77-78 (FT), Arg-83, Lys-84, and Gln-106. Tyr-124, Arg-128, and Ser-132 together coordinate substrate. FMN-binding positions include 141–142 (QS) and Trp-186. Substrate is bound at residue 192 to 194 (RLH). Arg-196 lines the FMN pocket.

This sequence belongs to the pyridoxamine 5'-phosphate oxidase family. As to quaternary structure, homodimer. Requires FMN as cofactor.

It carries out the reaction pyridoxamine 5'-phosphate + O2 + H2O = pyridoxal 5'-phosphate + H2O2 + NH4(+). The catalysed reaction is pyridoxine 5'-phosphate + O2 = pyridoxal 5'-phosphate + H2O2. The protein operates within cofactor metabolism; pyridoxal 5'-phosphate salvage; pyridoxal 5'-phosphate from pyridoxamine 5'-phosphate: step 1/1. Its pathway is cofactor metabolism; pyridoxal 5'-phosphate salvage; pyridoxal 5'-phosphate from pyridoxine 5'-phosphate: step 1/1. In terms of biological role, catalyzes the oxidation of either pyridoxine 5'-phosphate (PNP) or pyridoxamine 5'-phosphate (PMP) into pyridoxal 5'-phosphate (PLP). This is Pyridoxine/pyridoxamine 5'-phosphate oxidase from Cyanothece sp. (strain PCC 7425 / ATCC 29141).